We begin with the raw amino-acid sequence, 102 residues long: Large ribosomal subunit protein uL24 (102 aa).

It belongs to the universal ribosomal protein uL24 family. Part of the 50S ribosomal subunit.

Its function is as follows. One of two assembly initiator proteins, it binds directly to the 5'-end of the 23S rRNA, where it nucleates assembly of the 50S subunit. In terms of biological role, one of the proteins that surrounds the polypeptide exit tunnel on the outside of the subunit. The chain is Large ribosomal subunit protein uL24 from Lysinibacillus sphaericus (strain C3-41).